A 134-amino-acid polypeptide reads, in one-letter code: UPF0357 protein AAL017W (134 aa).

A signal peptide spans 1-23 (MFGLISLWHLFWLAVMAGILVVA).

The protein belongs to the UPF0357 family.

This is UPF0357 protein AAL017W from Eremothecium gossypii (strain ATCC 10895 / CBS 109.51 / FGSC 9923 / NRRL Y-1056) (Yeast).